The chain runs to 221 residues: Eukaryotic translation initiation factor 3 subunit K (221 aa).

The 162-residue stretch at 46–207 (YDLEANLACL…NIKTKHITEK (162 aa)) folds into the PCI domain.

This sequence belongs to the eIF-3 subunit K family. Component of the eukaryotic translation initiation factor 3 (eIF-3) complex.

It localises to the cytoplasm. Functionally, component of the eukaryotic translation initiation factor 3 (eIF-3) complex, which is involved in protein synthesis of a specialized repertoire of mRNAs and, together with other initiation factors, stimulates binding of mRNA and methionyl-tRNAi to the 40S ribosome. The eIF-3 complex specifically targets and initiates translation of a subset of mRNAs involved in cell proliferation. The polypeptide is Eukaryotic translation initiation factor 3 subunit K (Aedes aegypti (Yellowfever mosquito)).